The chain runs to 1251 residues: DNA repair protein REV1 (1251 aa).

One can recognise a BRCT domain in the interval 44–131 (TSSTIFSGVA…RLLSYIPYQL (88 aa)). 2 disordered regions span residues 206–236 (TSPG…NGAL) and 282–342 (STRN…VPSK). The span at 282–320 (STRNTDALRNPHRTNSFSLSPLHSNTKINGAHHSTVQGP) shows a compositional bias: polar residues. Over residues 321–342 (SSTKSTSSVSTFSKAAPSVPSK) the composition is skewed to low complexity. The interaction with target DNA stretch occupies residues 352-362 (FYSHSRLHHIS). Residues R357, 423–427 (DMDCF), 510–516 (SCSYEAR), N522, and D570 each bind dCTP. The region spanning 419 to 653 (IMHVDMDCFF…QLVTNLPGVG (235 aa)) is the UmuC domain. D423 is a binding site for Mg(2+). D570 and E571 together coordinate Mg(2+). Interaction with target DNA stretches follow at residues 653 to 656 (GHSM) and 709 to 717 (RKSVSAEIN). Disordered regions lie at residues 1035-1096 (AYDQ…KLLN) and 1119-1147 (HEGP…LQSD). Residues 1043-1056 (GENSTHQQSASASV) show a composition bias toward polar residues. Over residues 1070–1079 (EKKRNKKKKT) the composition is skewed to basic residues. A Nuclear localization signal motif is present at residues 1071–1078 (KKRNKKKK). The segment covering 1119-1129 (HEGPPAEKPLE) has biased composition (basic and acidic residues). Residues 1132–1146 (SASTSGVPGLSSLQS) show a composition bias toward polar residues. The segment at 1150-1249 (GCVRPPAPNL…LQQTYGSTLK (100 aa)) is protein interaction domain; mediates interaction with DNA polymerase zeta.

It belongs to the DNA polymerase type-Y family. In terms of assembly, monomer. Interacts with the DNA polymerase zeta which is composed of REV3L and MAD2L2; the interaction with MAD2L2 is direct and requires that REV3L is in its closed conformation. Interacts with POLH, POLI and POLK. May bind ITGA3. Interacts with FAAP20/C1orf86. As to expression, ubiquitous.

Its subcellular location is the nucleus. Deoxycytidyl transferase involved in DNA repair. Transfers a dCMP residue from dCTP to the 3'-end of a DNA primer in a template-dependent reaction. May assist in the first step in the bypass of abasic lesions by the insertion of a nucleotide opposite the lesion. Required for normal induction of mutations by physical and chemical agents. This is DNA repair protein REV1 (REV1) from Homo sapiens (Human).